The primary structure comprises 163 residues: Mating-type protein ALPHA2 (163 aa).

Residues Ile80 to Thr142 constitute a DNA-binding region (homeobox; TALE-type).

Belongs to the TALE/M-ATYP homeobox family.

It localises to the nucleus. Mating type proteins are sequence specific DNA-binding proteins that act as master switches in yeast differentiation by controlling gene expression in a cell type-specific fashion. In Pichia angusta (Yeast), this protein is Mating-type protein ALPHA2 (MATALPHA2).